Consider the following 172-residue polypeptide: Large ribosomal subunit protein bL17m (172 aa).

Residues M1–A8 constitute a mitochondrion transit peptide.

This sequence belongs to the bacterial ribosomal protein bL17 family. In terms of assembly, component of the mitochondrial ribosome large subunit (39S) which comprises a 16S rRNA and about 50 distinct proteins.

It is found in the mitochondrion. The chain is Large ribosomal subunit protein bL17m (MRPL17) from Bos taurus (Bovine).